The chain runs to 704 residues: MSKIRAGPKSGRKQLREITRAGQKRVRYDDEATVADLTPDNESDSDNAEPSVAAEREDVEQHRGQAYNALLTLLKSEHPERKHKSNKKIKKDSQRAEEDSPENDGINSEDEQQNIENALDDVSGGVVDEEDMEDSLSDVDESEDESDPFESHFSKYSESRLYAFDKGFKDKTVKYKSSKTDVSEEESLIYSKPCLDDEEVLPVKGKQTLSSYFIKQKLKLANDFQNNGLPLTEIQKELVDPMFQYKDMLYEYDDYADEDQYRDLYSLHALNHVYKTRDRILKNNQKLQENNDEELLDQGFTRPKVLIVVPTRDAAHKIVRKIMEKSGLDQFDKKSKFEDQFFEDSLPPTSKPKSFQHIFQGNTNDFFVLGLKFTRKSLKIYSNFYQSDIIICSPLGIQLILENTDKKKRQDDFLSSIEVMIIDQLHSIEYQNAMHVTTIFQHINKIPEQQREADFSRIRMWYINEQAKFFRQTIVFTKYISPFANSILNGKCRNLAGRWKNHRKIKPEQSSIGQLGLKVRQIFQRFDLAGGTALDEPDYRFKFFTSVIVPSIVKSTGYEDGILLYIPDYTDFIRVRNYLKEKTTIIFGEINEYSNQKQLTSNRARFQHGKVKVLLYTERLHHFRRYEIKNVKSVIFYKPPGNPEFYSEVVRNIGKNVFLGNCDINISTVRCIYSKMDGLSLERVVGSKRAAVLAHGQNEVYEFK.

The interval 1–152 (MSKIRAGPKS…EDESDPFESH (152 aa)) is disordered. The span at 54-63 (AEREDVEQHR) shows a compositional bias: basic and acidic residues. Positions 81-90 (RKHKSNKKIK) are enriched in basic residues. 2 stretches are compositionally biased toward acidic residues: residues 99-113 (DSPENDGINSEDEQQ) and 127-148 (VDEEDMEDSLSDVDESEDESDP).

This sequence belongs to the UTP25 family. Component of the ribosomal small subunit (SSU) processome composed of at least 40 protein subunits and snoRNA U3.

The protein resides in the nucleus. The protein localises to the nucleolus. DEAD-box RNA helicase-like protein required for pre-18S rRNA processing, specifically at sites A0, A1, and A2. This is U3 small nucleolar RNA-associated protein 25 (UTP25) from Kluyveromyces lactis (strain ATCC 8585 / CBS 2359 / DSM 70799 / NBRC 1267 / NRRL Y-1140 / WM37) (Yeast).